Here is a 545-residue protein sequence, read N- to C-terminus: CTP synthase (545 aa).

Positions 1 to 266 (MTTNYIFVTG…DDYICKRFSL (266 aa)) are amidoligase domain. Ser-14 provides a ligand contact to CTP. Ser-14 lines the UTP pocket. ATP-binding positions include 15-20 (SLGKGI) and Asp-72. Mg(2+) is bound by residues Asp-72 and Glu-140. CTP contacts are provided by residues 147 to 149 (DIE), 187 to 192 (KTKPTQ), and Lys-223. Residues 187-192 (KTKPTQ) and Lys-223 each bind UTP. Residue 239-241 (KDV) coordinates ATP. One can recognise a Glutamine amidotransferase type-1 domain in the interval 291 to 542 (NIGMVGKYVE…VKAASEYQKR (252 aa)). Gly-352 contacts L-glutamine. Cys-379 serves as the catalytic Nucleophile; for glutamine hydrolysis. L-glutamine contacts are provided by residues 380–383 (LGMQ), Glu-403, and Arg-470. Catalysis depends on residues His-515 and Glu-517.

This sequence belongs to the CTP synthase family. In terms of assembly, homotetramer.

The catalysed reaction is UTP + L-glutamine + ATP + H2O = CTP + L-glutamate + ADP + phosphate + 2 H(+). The enzyme catalyses L-glutamine + H2O = L-glutamate + NH4(+). It catalyses the reaction UTP + NH4(+) + ATP = CTP + ADP + phosphate + 2 H(+). Its pathway is pyrimidine metabolism; CTP biosynthesis via de novo pathway; CTP from UDP: step 2/2. With respect to regulation, allosterically activated by GTP, when glutamine is the substrate; GTP has no effect on the reaction when ammonia is the substrate. The allosteric effector GTP functions by stabilizing the protein conformation that binds the tetrahedral intermediate(s) formed during glutamine hydrolysis. Inhibited by the product CTP, via allosteric rather than competitive inhibition. Functionally, catalyzes the ATP-dependent amination of UTP to CTP with either L-glutamine or ammonia as the source of nitrogen. Regulates intracellular CTP levels through interactions with the four ribonucleotide triphosphates. The protein is CTP synthase of Erwinia tasmaniensis (strain DSM 17950 / CFBP 7177 / CIP 109463 / NCPPB 4357 / Et1/99).